The primary structure comprises 245 residues: tRNA (guanine-N(1)-)-methyltransferase (245 aa).

S-adenosyl-L-methionine contacts are provided by residues glycine 111 and 131-136; that span reads IGDYVL.

Belongs to the RNA methyltransferase TrmD family. As to quaternary structure, homodimer.

The protein resides in the cytoplasm. It catalyses the reaction guanosine(37) in tRNA + S-adenosyl-L-methionine = N(1)-methylguanosine(37) in tRNA + S-adenosyl-L-homocysteine + H(+). Specifically methylates guanosine-37 in various tRNAs. In Staphylococcus haemolyticus (strain JCSC1435), this protein is tRNA (guanine-N(1)-)-methyltransferase.